The chain runs to 193 residues: Dual-action ribosomal maturation protein DarP (193 aa).

The span at M1 to E10 shows a compositional bias: basic and acidic residues. Disordered regions lie at residues M1–R20 and Q171–E193. Positions G181 to E193 are enriched in acidic residues.

Belongs to the DarP family.

The protein localises to the cytoplasm. Functionally, member of a network of 50S ribosomal subunit biogenesis factors which assembles along the 30S-50S interface, preventing incorrect 23S rRNA structures from forming. Promotes peptidyl transferase center (PTC) maturation. The polypeptide is Dual-action ribosomal maturation protein DarP (Xanthomonas oryzae pv. oryzae (strain KACC10331 / KXO85)).